We begin with the raw amino-acid sequence, 1393 residues long: DNA-directed RNA polymerase subunit beta' (1393 aa).

Residues Cys72, Cys74, Cys87, and Cys90 each contribute to the Zn(2+) site. 3 residues coordinate Mg(2+): Asp463, Asp465, and Asp467. Residues Cys812, Cys887, Cys894, and Cys897 each contribute to the Zn(2+) site.

Belongs to the RNA polymerase beta' chain family. As to quaternary structure, the RNAP catalytic core consists of 2 alpha, 1 beta, 1 beta' and 1 omega subunit. When a sigma factor is associated with the core the holoenzyme is formed, which can initiate transcription. It depends on Mg(2+) as a cofactor. Requires Zn(2+) as cofactor.

It catalyses the reaction RNA(n) + a ribonucleoside 5'-triphosphate = RNA(n+1) + diphosphate. DNA-dependent RNA polymerase catalyzes the transcription of DNA into RNA using the four ribonucleoside triphosphates as substrates. This Chlamydia caviae (strain ATCC VR-813 / DSM 19441 / 03DC25 / GPIC) (Chlamydophila caviae) protein is DNA-directed RNA polymerase subunit beta'.